Here is a 100-residue protein sequence, read N- to C-terminus: Large ribosomal subunit protein bL28 (100 aa).

The interval 1-25 is disordered; the sequence is MTRRCDITGKSVLSGNNVSHANNKS. Positions 11–22 are enriched in polar residues; the sequence is SVLSGNNVSHAN.

This sequence belongs to the bacterial ribosomal protein bL28 family.

The sequence is that of Large ribosomal subunit protein bL28 from Acidiphilium cryptum (strain JF-5).